We begin with the raw amino-acid sequence, 20 residues long: Elastase (20 aa).

A Peptidase S1 domain is found at 1–20 (VVGGEVARAHSWPWQISLQY).

It belongs to the peptidase S1 family. Elastase subfamily.

Functionally, digests most rapidly at the C-terminal side of alanine residues, but also cleaves at valine and leucine residues. The protein is Elastase of Gadus morhua (Atlantic cod).